An 84-amino-acid polypeptide reads, in one-letter code: Antitoxin VapB30 (84 aa).

Its function is as follows. Antitoxin component of a type II toxin-antitoxin (TA) system. Upon expression in M.smegmatis neutralizes the effect of cognate toxin VapC30. The protein is Antitoxin VapB30 (vapB30) of Mycobacterium tuberculosis (strain ATCC 25618 / H37Rv).